We begin with the raw amino-acid sequence, 478 residues long: Cytochrome c-552 (478 aa).

The N-terminal stretch at 1 to 26 (MARKTLRARRFFSLIFPFFFITSVYA) is a signal peptide. His-94 provides a ligand contact to heme c. 3 residues coordinate heme: Cys-122, Cys-125, and Lys-126. Heme c-binding residues include Cys-160, Cys-163, His-164, Cys-209, Cys-212, and His-213. Residues Glu-215, Tyr-216, Lys-261, and Gln-263 each contribute to the Ca(2+) site. Tyr-216 lines the substrate pocket. His-264 contacts substrate. Heme c contacts are provided by His-275, Cys-282, Cys-285, His-286, His-301, Cys-314, Cys-317, His-318, and His-393.

This sequence belongs to the cytochrome c-552 family. Ca(2+) serves as cofactor. Requires heme c as cofactor.

The protein localises to the periplasm. The catalysed reaction is 6 Fe(III)-[cytochrome c] + NH4(+) + 2 H2O = 6 Fe(II)-[cytochrome c] + nitrite + 8 H(+). It participates in nitrogen metabolism; nitrate reduction (assimilation). Catalyzes the reduction of nitrite to ammonia, consuming six electrons in the process. This chain is Cytochrome c-552, found in Salmonella agona (strain SL483).